We begin with the raw amino-acid sequence, 77 residues long: Acyl carrier protein (77 aa).

In terms of domain architecture, Carrier spans 2-77 (SSIEERVNKI…SAVDYIKAHS (76 aa)). O-(pantetheine 4'-phosphoryl)serine is present on Ser37.

It belongs to the acyl carrier protein (ACP) family. 4'-phosphopantetheine is transferred from CoA to a specific serine of apo-ACP by AcpS. This modification is essential for activity because fatty acids are bound in thioester linkage to the sulfhydryl of the prosthetic group.

Its subcellular location is the cytoplasm. It functions in the pathway lipid metabolism; fatty acid biosynthesis. Its function is as follows. Carrier of the growing fatty acid chain in fatty acid biosynthesis. In Alcanivorax borkumensis (strain ATCC 700651 / DSM 11573 / NCIMB 13689 / SK2), this protein is Acyl carrier protein.